The chain runs to 332 residues: Putative peptide import ATP-binding protein BruAb2_1033 (332 aa).

The ABC transporter domain maps to 11–261 (LEVSNLSVDF…PLHPYTEGLL (251 aa)). Residue 47–54 (GESGSGKS) coordinates ATP.

Belongs to the ABC transporter superfamily. In terms of assembly, the complex is composed of two ATP-binding proteins (BruAb2_1033 and BruAb2_1034), two transmembrane proteins (BruAb2_1031 and BruAb2_1032) and a solute-binding protein (BruAb2_1030).

It localises to the cell inner membrane. Its function is as follows. Probably part of an ABC transporter complex that could be involved in peptide import. Probably responsible for energy coupling to the transport system. This Brucella abortus biovar 1 (strain 9-941) protein is Putative peptide import ATP-binding protein BruAb2_1033.